A 375-amino-acid chain; its full sequence is Transmembrane protein 183 (375 aa).

2 disordered regions span residues 1–21 (MARGSGQLGGPHRDTVTMPKR) and 94–128 (LDSSDEMDAQEESTQERSVSRKKKSKRHKEDPDGT). Acidic residues predominate over residues 95-106 (DSSDEMDAQEES). Residues 299–319 (LNFIFIPIVMGMIFTLFTINV) form a helical membrane-spanning segment.

Belongs to the TMEM183 family.

Its subcellular location is the membrane. This Mus musculus (Mouse) protein is Transmembrane protein 183 (Tmem183).